The sequence spans 69 residues: DNA gyrase inhibitor YacG (69 aa).

Residues cysteine 14, cysteine 17, cysteine 33, and cysteine 37 each contribute to the Zn(2+) site. Residues 46–69 form a disordered region; that stretch reads ADEEKSIPGAPDMSDSDGWSEDQY. Over residues 59–69 the composition is skewed to acidic residues; sequence SDSDGWSEDQY.

Belongs to the DNA gyrase inhibitor YacG family. Interacts with GyrB. Zn(2+) serves as cofactor.

Inhibits all the catalytic activities of DNA gyrase by preventing its interaction with DNA. Acts by binding directly to the C-terminal domain of GyrB, which probably disrupts DNA binding by the gyrase. The chain is DNA gyrase inhibitor YacG from Aliivibrio fischeri (strain ATCC 700601 / ES114) (Vibrio fischeri).